The sequence spans 239 residues: Pathogenesis-related protein 5 (239 aa).

Residues 1–23 (MANISSIHILFLVFITSGIAVMA) form the signal peptide. 8 disulfides stabilise this stretch: cysteine 32–cysteine 238, cysteine 79–cysteine 89, cysteine 94–cysteine 99, cysteine 146–cysteine 228, cysteine 151–cysteine 211, cysteine 159–cysteine 174, cysteine 178–cysteine 187, and cysteine 188–cysteine 198.

Belongs to the thaumatin family.

The protein localises to the secreted. It is found in the extracellular space. It localises to the apoplast. Its function is as follows. Partially responsible for acquired pathogen resistance. The chain is Pathogenesis-related protein 5 from Arabidopsis thaliana (Mouse-ear cress).